The following is a 141-amino-acid chain: Large ribosomal subunit protein uL11A (141 aa).

This sequence belongs to the universal ribosomal protein uL11 family. In terms of assembly, part of the ribosomal stalk of the 50S ribosomal subunit. Interacts with L10 and the large rRNA to form the base of the stalk. L10 forms an elongated spine to which L12 dimers bind in a sequential fashion forming a multimeric L10(L12)X complex. Post-translationally, one or more lysine residues are methylated.

Forms part of the ribosomal stalk which helps the ribosome interact with GTP-bound translation factors. The chain is Large ribosomal subunit protein uL11A from Halalkalibacterium halodurans (strain ATCC BAA-125 / DSM 18197 / FERM 7344 / JCM 9153 / C-125) (Bacillus halodurans).